Here is a 361-residue protein sequence, read N- to C-terminus: Chorismate synthase (361 aa).

Positions 48 and 54 each coordinate NADP(+). FMN-binding positions include 125 to 127 (RSS), 238 to 239 (NA), glycine 278, 293 to 297 (KPTSS), and arginine 319.

It belongs to the chorismate synthase family. In terms of assembly, homotetramer. The cofactor is FMNH2.

The catalysed reaction is 5-O-(1-carboxyvinyl)-3-phosphoshikimate = chorismate + phosphate. Its pathway is metabolic intermediate biosynthesis; chorismate biosynthesis; chorismate from D-erythrose 4-phosphate and phosphoenolpyruvate: step 7/7. Functionally, catalyzes the anti-1,4-elimination of the C-3 phosphate and the C-6 proR hydrogen from 5-enolpyruvylshikimate-3-phosphate (EPSP) to yield chorismate, which is the branch point compound that serves as the starting substrate for the three terminal pathways of aromatic amino acid biosynthesis. This reaction introduces a second double bond into the aromatic ring system. The sequence is that of Chorismate synthase from Methylobacillus flagellatus (strain ATCC 51484 / DSM 6875 / VKM B-1610 / KT).